A 718-amino-acid chain; its full sequence is Coiled-coil domain-containing protein 157 (718 aa).

Residues 300–603 (LRAQLEDAEG…LTKIREVAQQ (304 aa)) are a coiled coil. The span at 469-482 (RGSLDEAEAQRSEL) shows a compositional bias: basic and acidic residues. Disordered stretches follow at residues 469-490 (RGSL…QSLQ) and 617-690 (PPYK…TQNP). Positions 639 to 659 (TGRRQSPGSRTSSTGRTHPGG) are enriched in low complexity.

This Mus musculus (Mouse) protein is Coiled-coil domain-containing protein 157 (Ccdc157).